The sequence spans 173 residues: 2-C-methyl-D-erythritol 2,4-cyclodiphosphate synthase (173 aa).

The a divalent metal cation site is built by aspartate 17 and histidine 19. 4-CDP-2-C-methyl-D-erythritol 2-phosphate-binding positions include 17 to 19 (DVH) and 49 to 50 (HS). Position 57 (histidine 57) interacts with a divalent metal cation. Residues 76-80 (FPNTD), 147-150 (TTTE), and arginine 157 contribute to the 4-CDP-2-C-methyl-D-erythritol 2-phosphate site.

Belongs to the IspF family. Homotrimer. A divalent metal cation serves as cofactor.

The enzyme catalyses 4-CDP-2-C-methyl-D-erythritol 2-phosphate = 2-C-methyl-D-erythritol 2,4-cyclic diphosphate + CMP. The protein operates within isoprenoid biosynthesis; isopentenyl diphosphate biosynthesis via DXP pathway; isopentenyl diphosphate from 1-deoxy-D-xylulose 5-phosphate: step 4/6. Its function is as follows. Involved in the biosynthesis of isopentenyl diphosphate (IPP) and dimethylallyl diphosphate (DMAPP), two major building blocks of isoprenoid compounds. Catalyzes the conversion of 4-diphosphocytidyl-2-C-methyl-D-erythritol 2-phosphate (CDP-ME2P) to 2-C-methyl-D-erythritol 2,4-cyclodiphosphate (ME-CPP) with a corresponding release of cytidine 5-monophosphate (CMP). The sequence is that of 2-C-methyl-D-erythritol 2,4-cyclodiphosphate synthase from Ehrlichia ruminantium (strain Gardel).